Consider the following 954-residue polypeptide: Isoleucine--tRNA ligase (954 aa).

Positions 60 to 70 (PYANGALHMGH) match the 'HIGH' region motif. Position 564 (Glu564) interacts with L-isoleucyl-5'-AMP. The 'KMSKS' region motif lies at 605–609 (KMSKS). Lys608 provides a ligand contact to ATP. Residues Cys923, Cys926, Cys943, and Cys946 each contribute to the Zn(2+) site.

Belongs to the class-I aminoacyl-tRNA synthetase family. IleS type 1 subfamily. Monomer. It depends on Zn(2+) as a cofactor.

Its subcellular location is the cytoplasm. The catalysed reaction is tRNA(Ile) + L-isoleucine + ATP = L-isoleucyl-tRNA(Ile) + AMP + diphosphate. In terms of biological role, catalyzes the attachment of isoleucine to tRNA(Ile). As IleRS can inadvertently accommodate and process structurally similar amino acids such as valine, to avoid such errors it has two additional distinct tRNA(Ile)-dependent editing activities. One activity is designated as 'pretransfer' editing and involves the hydrolysis of activated Val-AMP. The other activity is designated 'posttransfer' editing and involves deacylation of mischarged Val-tRNA(Ile). This Synechococcus sp. (strain ATCC 27144 / PCC 6301 / SAUG 1402/1) (Anacystis nidulans) protein is Isoleucine--tRNA ligase.